The primary structure comprises 157 residues: uncharacterized protein (157 aa).

The next 4 membrane-spanning stretches (helical) occupy residues 29-49 (LLIIPLLLLWGVSASFQPAYF), 52-72 (VLHVAISGILLLIGLACGFGI), 93-113 (LGSVILILVILSLRMAARTWL), and 117-137 (NEMFIAIIHSMFFVPLGTITA).

Its subcellular location is the cell membrane. This is an uncharacterized protein from Bacillus subtilis (strain 168).